We begin with the raw amino-acid sequence, 304 residues long: Transmembrane protein 178A (304 aa).

Residues Met1–Ala25 form the signal peptide. Over Ile26–Gly186 the chain is Extracellular. N-linked (GlcNAc...) asparagine glycosylation is present at Asn165. The chain crosses the membrane as a helical span at residues Phe187–Phe207. Residues Trp208–His215 lie on the Cytoplasmic side of the membrane. A helical transmembrane segment spans residues Val216–Ala236. Over Ala237–Cys267 the chain is Extracellular. A helical membrane pass occupies residues Ala268 to Ile288. Topologically, residues Ser289–Val304 are cytoplasmic.

It belongs to the TMEM178 family.

It is found in the endoplasmic reticulum membrane. In terms of biological role, may act as a negative regulator of osteoclast differentiation. The chain is Transmembrane protein 178A (tmem178a) from Xenopus laevis (African clawed frog).